Reading from the N-terminus, the 239-residue chain is ATP-dependent dethiobiotin synthetase BioD (239 aa).

15 to 20 (EIGKTF) lines the ATP pocket. Threonine 19 contributes to the Mg(2+) binding site. Lysine 40 is a catalytic residue. ATP is bound by residues aspartate 57, 118–121 (EGVG), 178–179 (NH), and 211–213 (AHL). 2 residues coordinate Mg(2+): aspartate 57 and glutamate 118.

This sequence belongs to the dethiobiotin synthetase family. Homodimer. The cofactor is Mg(2+).

It localises to the cytoplasm. The catalysed reaction is (7R,8S)-7,8-diammoniononanoate + CO2 + ATP = (4R,5S)-dethiobiotin + ADP + phosphate + 3 H(+). The protein operates within cofactor biosynthesis; biotin biosynthesis; biotin from 7,8-diaminononanoate: step 1/2. In terms of biological role, catalyzes a mechanistically unusual reaction, the ATP-dependent insertion of CO2 between the N7 and N8 nitrogen atoms of 7,8-diaminopelargonic acid (DAPA, also called 7,8-diammoniononanoate) to form a ureido ring. The sequence is that of ATP-dependent dethiobiotin synthetase BioD from Burkholderia ambifaria (strain MC40-6).